A 442-amino-acid chain; its full sequence is Protein cereblon (442 aa).

The tract at residues 1–45 is disordered; it reads MAGEGDQQDAAHNMGNHLPLLPAESEEEDEMEVEDQDSKEAKKPN. The segment covering 24 to 35 has biased composition (acidic residues); the sequence is ESEEEDEMEVED. S25 is subject to Phosphoserine. The region spanning 81-319 is the Lon N-terminal domain; sequence IPVLPQVMMI…CELDIMNKCT (239 aa). Positions 318–426 constitute a CULT domain; it reads CTSLCCKQCQ…LTRSALLPTI (109 aa). Positions 323 and 326 each coordinate Zn(2+). H378, W380, and W386 together coordinate (S)-thalidomide. Residues C391 and C394 each coordinate Zn(2+).

Belongs to the CRBN family. As to quaternary structure, interacts with KCNT1. Component of a DCX (DDB1-CUL4-X-box) protein ligase complex, at least composed of CRBN, CUL4A, DDB1 and RBX1. Interacts directly with DDB1. Interacts (in pomalidomide-bound form) with IKZF1 and IKZF3. Interacts with ILF2. Interacts with TRAF6 and ECSIT. In terms of processing, ubiquitinated, ubiquitination is mediated by its own DCX protein ligase complex. As to expression, widely expressed. Highly expressed in brain.

The protein resides in the cytoplasm. Its subcellular location is the nucleus. It localises to the membrane. It participates in protein modification; protein ubiquitination. In terms of biological role, substrate recognition component of a DCX (DDB1-CUL4-X-box) E3 protein ligase complex that mediates the ubiquitination and subsequent proteasomal degradation of target proteins, such as MEIS2, ILF2 or GLUL. Normal degradation of key regulatory proteins is required for normal limb outgrowth and expression of the fibroblast growth factor FGF8. Maintains presynaptic glutamate release and consequently cognitive functions, such as memory and learning, by negatively regulating large-conductance calcium-activated potassium (BK) channels in excitatory neurons. Likely to function by regulating the assembly and neuronal surface expression of BK channels via its interaction with KCNT1. May also be involved in regulating anxiety-like behaviors via a BK channel-independent mechanism. Plays a negative role in TLR4 signaling by interacting with TRAF6 and ECSIT, leading to inhibition of ECSIT ubiquitination, an important step of the signaling. This is Protein cereblon (CRBN) from Homo sapiens (Human).